The chain runs to 317 residues: Acetyl-coenzyme A carboxylase carboxyl transferase subunit alpha (317 aa).

In terms of domain architecture, CoA carboxyltransferase C-terminal spans L40–S293.

The protein belongs to the AccA family. In terms of assembly, acetyl-CoA carboxylase is a heterohexamer composed of biotin carboxyl carrier protein (AccB), biotin carboxylase (AccC) and two subunits each of ACCase subunit alpha (AccA) and ACCase subunit beta (AccD).

Its subcellular location is the cytoplasm. It catalyses the reaction N(6)-carboxybiotinyl-L-lysyl-[protein] + acetyl-CoA = N(6)-biotinyl-L-lysyl-[protein] + malonyl-CoA. Its pathway is lipid metabolism; malonyl-CoA biosynthesis; malonyl-CoA from acetyl-CoA: step 1/1. Component of the acetyl coenzyme A carboxylase (ACC) complex. First, biotin carboxylase catalyzes the carboxylation of biotin on its carrier protein (BCCP) and then the CO(2) group is transferred by the carboxyltransferase to acetyl-CoA to form malonyl-CoA. In Brucella anthropi (strain ATCC 49188 / DSM 6882 / CCUG 24695 / JCM 21032 / LMG 3331 / NBRC 15819 / NCTC 12168 / Alc 37) (Ochrobactrum anthropi), this protein is Acetyl-coenzyme A carboxylase carboxyl transferase subunit alpha.